The sequence spans 171 residues: UPF0398 protein MGAS10270_Spy1470 (171 aa).

The protein belongs to the UPF0398 family.

The sequence is that of UPF0398 protein MGAS10270_Spy1470 from Streptococcus pyogenes serotype M2 (strain MGAS10270).